The chain runs to 485 residues: MKKQPQKTLLAIALSVVSGTAMSHGYVSAVENGVAEARVTLCKFAASTGEKNTNCGAIQYEPQSVEGPDGFPASGPRDGKIASAESALANALDEQTADRWVKHPIQTGAQNFEWTFTANHVTKDWKYYITKPDWNPNQPLARASFDLTPFCVVDGGMVQPPKRVSHTCNVPEREGYQVILAVWDVGDTAASFYNVIDVKFDGDGPALPDWQQGGQIIPTMNLNVGDTVFTRVFDLAGENPAYTTELAINSDALTVANNWSHALAVKINQTQSEIAAGQLNEQNQFVPVYGTNPIFLKSGSNLQRVEIGYKIETPAPEYDVTLSGLASEYQISDVPVTLDLSLQATGDITTELIVYNHHKEPLAFESVAMKDGENKAVSMTLSKSEAGHHMLVTKVLDKDGKLQKQQTSDFMLTETQTPPPSNDYDFVFPDGLSSYTAGTKVLASDGAIYQCKPFPYSGYCVQWTPTATQYQPGTGSHWQMAWDKL.

A signal peptide spans 1–29 (MKKQPQKTLLAIALSVVSGTAMSHGYVSA). The 171-residue stretch at 30-200 (VENGVAEARV…SFYNVIDVKF (171 aa)) folds into the Chitin-binding type-4 domain. The Chitin-binding type-3 domain occupies 437–478 (AGTKVLASDGAIYQCKPFPYSGYCVQWTPTATQYQPGTGSHW).

It belongs to the GbpA family.

It localises to the secreted. In terms of biological role, probably interacts with GlcNAc residues. May promote attachment to both epithelial cell surfaces and chitin. The sequence is that of GlcNAc-binding protein A from Vibrio vulnificus (strain YJ016).